Here is a 293-residue protein sequence, read N- to C-terminus: Nitrogenase iron protein (293 aa).

10 to 17 lines the ATP pocket; that stretch reads GKGGIGKS. Residue C98 coordinates [4Fe-4S] cluster. At R101 the chain carries ADP-ribosylarginine; by dinitrogenase reductase ADP-ribosyltransferase. A [4Fe-4S] cluster-binding site is contributed by C133.

The protein belongs to the NifH/BchL/ChlL family. In terms of assembly, homodimer. [4Fe-4S] cluster serves as cofactor. The reversible ADP-ribosylation of Arg-101 inactivates the nitrogenase reductase and regulates nitrogenase activity.

The catalysed reaction is N2 + 8 reduced [2Fe-2S]-[ferredoxin] + 16 ATP + 16 H2O = H2 + 8 oxidized [2Fe-2S]-[ferredoxin] + 2 NH4(+) + 16 ADP + 16 phosphate + 6 H(+). Its function is as follows. The key enzymatic reactions in nitrogen fixation are catalyzed by the nitrogenase complex, which has 2 components: the iron protein and the molybdenum-iron protein. The chain is Nitrogenase iron protein from Klebsiella pneumoniae (strain 342).